A 550-amino-acid polypeptide reads, in one-letter code: Membrane protein insertase YidC (550 aa).

Residues 6 to 26 (LIVFIVLSFGLLFVWQEYFAP) form a helical membrane-spanning segment. Residues 30–59 (PKPVAAAVQPDGTPAPATARPADSPATGKL) form a disordered region. Transmembrane regions (helical) follow at residues 360 to 380 (WGWAIVLLTVLVKAAFYPLSA), 430 to 450 (LPIVVQIPVFIGLYWALLASV), 472 to 492 (ILPALMAATMYLQTFLNPPPA), and 504 to 524 (PLAFSVMFFFFPAGLVLYWLV).

It belongs to the OXA1/ALB3/YidC family. Type 1 subfamily. As to quaternary structure, interacts with the Sec translocase complex via SecD. Specifically interacts with transmembrane segments of nascent integral membrane proteins during membrane integration.

The protein resides in the cell inner membrane. Required for the insertion and/or proper folding and/or complex formation of integral membrane proteins into the membrane. Involved in integration of membrane proteins that insert both dependently and independently of the Sec translocase complex, as well as at least some lipoproteins. Aids folding of multispanning membrane proteins. The sequence is that of Membrane protein insertase YidC from Laribacter hongkongensis (strain HLHK9).